Reading from the N-terminus, the 998-residue chain is Methyl sulfide methyltransferase-associated sensor (998 aa).

The PAS 1 domain maps to 40-77; it reads FGYSPKDFISGGLGYADIIYPADLEIAVSQFFSYVEKD. Residues 117-169 enclose the PAC 1 domain; it reads FTQQYRLLNKSGDVLWVEAEIKVLEEEEGKAGLFQVTVFDISRWKHTEKAMPA. The PAS 2 domain occupies 209-246; sequence LGYTPEDFTSGRIVYTDIIHPDDLDNVRAEVSKNTEEG. The PAC 2 domain occupies 250–302; it reads FSKEYRVLAKSGEVRYVDERTLIRRNEKGEITCYQGILLDITQRKEAEELILS. The GAF 1 domain occupies 314-458; sequence ASLDEVLLLL…NAYLAGIAIE (145 aa). Residues 469-540 enclose the PAS 3 domain; sequence SENRFRTIFD…ENMQKIKAEG (72 aa). A GAF 2 domain is found at 609–752; it reads ASLKEITDFA…LMQGMWQLIQ (144 aa). A heme-binding site is contributed by Cys656. The region spanning 783 to 998 is the Histidine kinase domain; that stretch reads EFVEEMMFPE…GNLMHVKLPK (216 aa).

The cofactor is heme. Post-translationally, autophosphorylates: autophosphorylation is dependent on the redox state of heme cofactor and is promoted upon reduction.

The protein resides in the cytoplasm. The catalysed reaction is ATP + protein L-histidine = ADP + protein N-phospho-L-histidine.. Its function is as follows. Heme-binding sensor kinase component part of a two-component regulatory system involved in methyl sulfide metabolism. Does not act as a phytochrome-like photoreceptor. This is Methyl sulfide methyltransferase-associated sensor (msmS) from Methanosarcina acetivorans (strain ATCC 35395 / DSM 2834 / JCM 12185 / C2A).